Consider the following 800-residue polypeptide: Phenylalanine--tRNA ligase beta subunit (800 aa).

In terms of domain architecture, tRNA-binding spans 39–154 (TKDIKNLVVG…EAQVPGTDAL (116 aa)). Positions 408–483 (AFITPIDITA…RIYGYDDIPS (76 aa)) constitute a B5 domain. The Mg(2+) site is built by aspartate 461, aspartate 467, glutamate 470, and glutamate 471. The region spanning 708-800 (PRFPGMSRDI…ALIEQGAVIR (93 aa)) is the FDX-ACB domain.

Belongs to the phenylalanyl-tRNA synthetase beta subunit family. Type 1 subfamily. As to quaternary structure, tetramer of two alpha and two beta subunits. The cofactor is Mg(2+).

The protein localises to the cytoplasm. It catalyses the reaction tRNA(Phe) + L-phenylalanine + ATP = L-phenylalanyl-tRNA(Phe) + AMP + diphosphate + H(+). This Staphylococcus aureus (strain COL) protein is Phenylalanine--tRNA ligase beta subunit.